A 761-amino-acid polypeptide reads, in one-letter code: Zinc finger protein 711 (761 aa).

Residues K224, K235, and K296 each participate in a glycyl lysine isopeptide (Lys-Gly) (interchain with G-Cter in SUMO2) cross-link. C2H2-type zinc fingers lie at residues 383-408, 414-436, 476-499, 505-527, and 533-556; these read YPCHICTKKFKSRGFLKRHMKNHPDH, YQCTDCDFTTNKKVSFHNHLESH, HKCKYCDYETAEQGLLNRHLLAVH, HVCVECGKGFRHPSELKKHMRTH, and YQCQYCAFRCADQSNLKTHIKSKH. Residues 562–584 form a C2H2-type 6; atypical zinc finger; that stretch reads YKCEHCPQAFGDERELQRHLDLF. C564, C567, and H580 together coordinate Zn(2+). 6 consecutive C2H2-type zinc fingers follow at residues 590 to 613, 619 to 641, 647 to 670, 676 to 698, 704 to 727, and 733 to 755; these read HQCPHCDHKSTNSSDLKRHIISVH, HKCEVCDKGFHRPSELKKHSDIH, HQCRHCDFKTSDPFILSGHILSVH, LKCKRCKRGFRQQNELKKHMKTH, YQCEYCEYSTTDASGFKRHVISIH, and HRCEFCKKGFRRPSEKKQHIMRH.

The protein belongs to the krueppel C2H2-type zinc-finger protein family. As to quaternary structure, interacts with PHF8.

The protein localises to the nucleus. Functionally, transcription regulator required for brain development. Probably acts as a transcription factor that binds to the promoter of target genes and recruits PHF8 histone demethylase, leading to activated expression of genes involved in neuron development, such as KDM5C. May compete with transcription factor ARX for activation of expression of KDM5C. This chain is Zinc finger protein 711 (Znf711), found in Mus musculus (Mouse).